Consider the following 616-residue polypeptide: Protein RIK (616 aa).

Residues methionine 1–aspartate 11 are compositionally biased toward basic and acidic residues. Positions methionine 1 to alanine 32 are disordered. The KH domain maps to glycine 198–aspartate 304. Polar residues-rich tracts occupy residues threonine 432 to asparagine 449, threonine 475 to serine 484, and leucine 491 to isoleucine 502. Disordered stretches follow at residues threonine 432–glutamate 455 and leucine 467–valine 616. Positions leucine 534–phenylalanine 564 are enriched in pro residues. Basic and acidic residues-rich tracts occupy residues proline 565–asparagine 575 and serine 598–asparagine 610.

In terms of assembly, interacts with RS2. As to expression, expressed in vegetative tissues. More abundant in apices and young leaf primordia than in fully expanded leaf tissues.

It localises to the nucleus. The chain is Protein RIK from Zea mays (Maize).